Here is a 141-residue protein sequence, read N- to C-terminus: Large-conductance mechanosensitive channel (141 aa).

3 helical membrane passes run 14–34 (VMDL…VKSL), 38–58 (IIMP…YFLG), and 81–101 (GSFI…FLMV).

Belongs to the MscL family. Homopentamer.

It localises to the cell inner membrane. Functionally, channel that opens in response to stretch forces in the membrane lipid bilayer. May participate in the regulation of osmotic pressure changes within the cell. The protein is Large-conductance mechanosensitive channel of Rhizobium rhizogenes (strain K84 / ATCC BAA-868) (Agrobacterium radiobacter).